Reading from the N-terminus, the 133-residue chain is Small ribosomal subunit protein uS8 (133 aa).

It belongs to the universal ribosomal protein uS8 family. As to quaternary structure, part of the 30S ribosomal subunit. Contacts proteins S5 and S12.

Its function is as follows. One of the primary rRNA binding proteins, it binds directly to 16S rRNA central domain where it helps coordinate assembly of the platform of the 30S subunit. The sequence is that of Small ribosomal subunit protein uS8 from Prochlorococcus marinus (strain MIT 9303).